The sequence spans 405 residues: Probable tRNA sulfurtransferase (405 aa).

Residues 60-165 form the THUMP domain; sequence QEVSASLKKI…PDAAYISHEE (106 aa). Residues 183 to 184, 208 to 209, Arg-265, Gly-287, and Gln-296 each bind ATP; these read ML and HF.

It belongs to the ThiI family.

Its subcellular location is the cytoplasm. It carries out the reaction [ThiI sulfur-carrier protein]-S-sulfanyl-L-cysteine + a uridine in tRNA + 2 reduced [2Fe-2S]-[ferredoxin] + ATP + H(+) = [ThiI sulfur-carrier protein]-L-cysteine + a 4-thiouridine in tRNA + 2 oxidized [2Fe-2S]-[ferredoxin] + AMP + diphosphate. It catalyses the reaction [ThiS sulfur-carrier protein]-C-terminal Gly-Gly-AMP + S-sulfanyl-L-cysteinyl-[cysteine desulfurase] + AH2 = [ThiS sulfur-carrier protein]-C-terminal-Gly-aminoethanethioate + L-cysteinyl-[cysteine desulfurase] + A + AMP + 2 H(+). It functions in the pathway cofactor biosynthesis; thiamine diphosphate biosynthesis. Its function is as follows. Catalyzes the ATP-dependent transfer of a sulfur to tRNA to produce 4-thiouridine in position 8 of tRNAs, which functions as a near-UV photosensor. Also catalyzes the transfer of sulfur to the sulfur carrier protein ThiS, forming ThiS-thiocarboxylate. This is a step in the synthesis of thiazole, in the thiamine biosynthesis pathway. The sulfur is donated as persulfide by IscS. The protein is Probable tRNA sulfurtransferase of Streptococcus suis (strain 98HAH33).